An 830-amino-acid polypeptide reads, in one-letter code: Pentatricopeptide repeat-containing protein At5g55740, chloroplastic (830 aa).

Residues 1 to 59 (MASLPFNTIPNKVPFSVSSKPSSKHHDEQAHSPSSTSYFHRVSSLCKNGEIKEALSLVT) constitute a chloroplast transit peptide. A disordered region spans residues 15 to 36 (FSVSSKPSSKHHDEQAHSPSST). PPR repeat units follow at residues 69–103 (GPEI…GDFY), 106–136 (NEYI…LRVR), 137–171 (NVFS…EIFP), 172–206 (DNFV…GLED), 207–237 (CVFV…IPDR), 238–272 (NAVA…GVEP), 273–307 (TRVT…GMEL), 308–338 (DNIL…MFEK), 339–373 (DVVT…KLKY), 374–408 (DCVT…SFES), 409–439 (DIVL…TVEK), 440–474 (DLIL…GVPP), 475–509 (NVIT…GIIP), 510–544 (NLIS…GLRP), 545–575 (NAFS…IIRN), 581–611 (LVSI…KLYS), 612–646 (ELPL…GLKP), 647–682 (DNIT…SMKP), and 683–713 (CLEH…MPFK). The interval 718–793 (MIQSLVASCN…KPGCSWIQIT (76 aa)) is type E motif. The segment at 796-826 (EGVHVFVANDKTHTRINEIQMMLALLLYDMG) is type E(+) motif.

Belongs to the PPR family. PCMP-E subfamily.

The protein localises to the plastid. It is found in the chloroplast. Functionally, plays a major role in chloroplast RNA editing. Acts as a site-recognition transacting factor involved in the edition of the site 2 of ndhD (ndhD-2), which encodes a subunit of the NDH complex. The chain is Pentatricopeptide repeat-containing protein At5g55740, chloroplastic (CRR21) from Arabidopsis thaliana (Mouse-ear cress).